Here is a 321-residue protein sequence, read N- to C-terminus: MATH domain and coiled-coil domain-containing protein At3g58260 (321 aa).

The 130-residue stretch at 6 to 135 (NNTFTWVIKN…NDEVMVAVAV (130 aa)) folds into the MATH domain. The stretch at 232-283 (KLDWLEKKLDELFEKKKEEADKIRMQNIEEELKDLRQKCSSLEALLKKEKTG) forms a coiled coil.

This chain is MATH domain and coiled-coil domain-containing protein At3g58260, found in Arabidopsis thaliana (Mouse-ear cress).